The chain runs to 171 residues: Protein X (171 aa).

3 helical membrane passes run 11–31 (SWYQ…IYSL), 38–58 (LAGI…VYLM), and 73–93 (AVIA…WLVI).

It localises to the virion membrane. This Mus musculus domesticus (western European house mouse) protein is Protein X (VPX).